The chain runs to 221 residues: Cysteine protease inhibitor 8 (221 aa).

A signal peptide spans 1 to 26 (IPSINILSFLLLSSTLSLVAFARSFT). The propeptide occupies 27 to 42 (SENPIVLPTTCHDDDN). A Vacuolar targeting signal motif is present at residues 29–34 (NPIVLP). 2 disulfide bridges follow: Cys-84/Cys-136 and Cys-184/Cys-190.

It belongs to the protease inhibitor I3 (leguminous Kunitz-type inhibitor) family.

The protein resides in the vacuole. Functionally, inhibitor of cysteine proteases. May protect the plant by inhibiting proteases of invading organisms. The protein is Cysteine protease inhibitor 8 of Solanum tuberosum (Potato).